Here is a 69-residue protein sequence, read N- to C-terminus: Sec-independent protein translocase protein TatA (69 aa).

A helical membrane pass occupies residues 1–21; sequence MFGLGGQELILILMIILLLFG. The tract at residues 49–69 is disordered; it reads EFNKAMDDETPKKKDFGPDRE.

This sequence belongs to the TatA/E family. As to quaternary structure, forms a complex with TatC.

It localises to the cell inner membrane. In terms of biological role, part of the twin-arginine translocation (Tat) system that transports large folded proteins containing a characteristic twin-arginine motif in their signal peptide across membranes. TatA could form the protein-conducting channel of the Tat system. This Chlorobium luteolum (strain DSM 273 / BCRC 81028 / 2530) (Pelodictyon luteolum) protein is Sec-independent protein translocase protein TatA.